The sequence spans 488 residues: MAPAAWLRSAAARALLPPMLLLLLQPPPLLARALPPDAHHLHAERRGPQPWHAALPSSPAPAPATQEAPRPASSLRPPRCGVPDPSDGLSARNRQKRFVLSGGRWEKTDLTYRILRFPWQLVQEQVRQTMAEALKVWSDVTPLTFTEVHEGRADIMIDFARYWHGDDLPFDGPGGILAHAFFPKTHREGDVHFDYDETWTIGDDQGTDLLQVAAHEFGHVLGLQHTTAAKALMSAFYTFRYPLSLSPDDCRGVQHLYGQPWPTVTSRTPALGPQAGIDTNEIAPLEPDAPPDACEASFDAVSTIRGELFFFKAGFVWRLRGGQLQPGYPALASRHWQGLPSPVDAAFEDAQGHIWFFQGAQYWVYDGEKPVLGPAPLTELGLVRFPVHAALVWGPEKNKIYFFRGRDYWRFHPSTRRVDSPVPRRATDWRGVPSEIDAAFQDADGYAYFLRGRLYWKFDPVKVKALEGFPRLVGPDFFGCAEPANTFL.

Residues 1–31 (MAPAAWLRSAAARALLPPMLLLLLQPPPLLA) form the signal peptide. Positions 32–97 (RALPPDAHHL…GLSARNRQKR (66 aa)) are cleaved as a propeptide — activation peptide. The segment at 41-93 (LHAERRGPQPWHAALPSSPAPAPATQEAPRPASSLRPPRCGVPDPSDGLSARN) is disordered. Low complexity predominate over residues 50–79 (PWHAALPSSPAPAPATQEAPRPASSLRPPR). Residues 78–85 (PRCGVPDP) carry the Cysteine switch motif. 2 residues coordinate Zn(2+): cysteine 80 and aspartate 166. 4 residues coordinate Ca(2+): aspartate 171, glycine 172, glycine 174, and isoleucine 176. Residues histidine 179, histidine 192, and histidine 215 each coordinate Zn(2+). The active site involves glutamate 216. The Zn(2+) site is built by histidine 219 and histidine 225. Hemopexin repeat units follow at residues 291-339 (PDAC…WQGL), 340-382 (PSPV…ELGL), 384-432 (RFPV…WRGV), and 433-480 (PSEI…FFGC). An intrachain disulfide couples cysteine 294 to cysteine 480.

This sequence belongs to the peptidase M10A family. Ca(2+) serves as cofactor. Zn(2+) is required as a cofactor. The precursor is cleaved by a furin endopeptidase. Specifically expressed in stromal cells of breast carcinomas.

It is found in the secreted. The protein localises to the extracellular space. It localises to the extracellular matrix. Functionally, may play an important role in the progression of epithelial malignancies. In Homo sapiens (Human), this protein is Stromelysin-3 (MMP11).